Here is a 368-residue protein sequence, read N- to C-terminus: Histidinol-phosphate aminotransferase (368 aa).

Residue Lys229 is modified to N6-(pyridoxal phosphate)lysine.

The protein belongs to the class-II pyridoxal-phosphate-dependent aminotransferase family. Histidinol-phosphate aminotransferase subfamily. In terms of assembly, homodimer. Pyridoxal 5'-phosphate serves as cofactor.

The enzyme catalyses L-histidinol phosphate + 2-oxoglutarate = 3-(imidazol-4-yl)-2-oxopropyl phosphate + L-glutamate. It participates in amino-acid biosynthesis; L-histidine biosynthesis; L-histidine from 5-phospho-alpha-D-ribose 1-diphosphate: step 7/9. This Acidovorax ebreus (strain TPSY) (Diaphorobacter sp. (strain TPSY)) protein is Histidinol-phosphate aminotransferase.